A 335-amino-acid polypeptide reads, in one-letter code: Thioredoxin reductase (335 aa).

Residues 22–25 (SGPA), 44–51 (EGTSFGGA), Asn60, and Val93 contribute to the FAD site. An intrachain disulfide couples Cys145 to Cys148. Residues Ser166, His185, Arg191, Ile248, and Tyr268 each contribute to the NADP(+) site. Residues Asp288 and 295–298 (RQAV) contribute to the FAD site. Arg295 is a binding site for NADP(+).

The protein belongs to the class-II pyridine nucleotide-disulfide oxidoreductase family. As to quaternary structure, homodimer. FAD is required as a cofactor.

It is found in the cytoplasm. The catalysed reaction is [thioredoxin]-dithiol + NADP(+) = [thioredoxin]-disulfide + NADPH + H(+). This chain is Thioredoxin reductase, found in Mycobacterium tuberculosis (strain CDC 1551 / Oshkosh).